Here is a 397-residue protein sequence, read N- to C-terminus: Tryptophan synthase beta chain (397 aa).

Position 87 is an N6-(pyridoxal phosphate)lysine (K87).

This sequence belongs to the TrpB family. In terms of assembly, tetramer of two alpha and two beta chains. Pyridoxal 5'-phosphate is required as a cofactor.

The enzyme catalyses (1S,2R)-1-C-(indol-3-yl)glycerol 3-phosphate + L-serine = D-glyceraldehyde 3-phosphate + L-tryptophan + H2O. The protein operates within amino-acid biosynthesis; L-tryptophan biosynthesis; L-tryptophan from chorismate: step 5/5. Functionally, the beta subunit is responsible for the synthesis of L-tryptophan from indole and L-serine. This chain is Tryptophan synthase beta chain, found in Salmonella agona (strain SL483).